The primary structure comprises 289 residues: Ribosomal protein L11 methyltransferase (289 aa).

Residues threonine 142, glycine 163, aspartate 185, and asparagine 226 each coordinate S-adenosyl-L-methionine.

It belongs to the methyltransferase superfamily. PrmA family.

It is found in the cytoplasm. The enzyme catalyses L-lysyl-[protein] + 3 S-adenosyl-L-methionine = N(6),N(6),N(6)-trimethyl-L-lysyl-[protein] + 3 S-adenosyl-L-homocysteine + 3 H(+). In terms of biological role, methylates ribosomal protein L11. The polypeptide is Ribosomal protein L11 methyltransferase (Legionella pneumophila (strain Lens)).